A 718-amino-acid polypeptide reads, in one-letter code: Nucleolar protein 11 (718 aa).

K346 carries the N6-methyllysine modification.

Interacts with UTP4. Interacts with FBL/fibrillarin in a transcription-dependent manner. May associate with the proposed t-UTP subcomplex of the SSU processome containing at least UTP4, WDR43, HEATR1, UTP15, WDR75.

The protein localises to the nucleus. Its subcellular location is the nucleolus. In terms of biological role, ribosome biogenesis factor. May be required for both optimal rDNA transcription and small subunit (SSU) pre-rRNA processing at sites A', A0, 1 and 2b. This chain is Nucleolar protein 11 (NOL11), found in Bos taurus (Bovine).